A 718-amino-acid chain; its full sequence is Putative methyltransferase NSUN7 (718 aa).

Cys-439 serves as the catalytic Nucleophile. Disordered stretches follow at residues 536–557, 578–616, and 694–718; these read GKSS…KGAT, ANLS…PAVP, and SLSR…RRWL. Residues 538–549 show a composition bias toward basic residues; sequence SSKREKKKKKSK. Over residues 591–604 the composition is skewed to polar residues; that stretch reads QKNTAQVGASSQTR. Over residues 696-706 the composition is skewed to basic and acidic residues; that stretch reads SRKEEKPKDDT.

The protein belongs to the class I-like SAM-binding methyltransferase superfamily. RsmB/NOP family.

Its function is as follows. May have S-adenosyl-L-methionine-dependent methyl-transferase activity. This is Putative methyltransferase NSUN7 (NSUN7) from Homo sapiens (Human).